A 146-amino-acid polypeptide reads, in one-letter code: Basic phospholipase A2 beta-bungarotoxin A1 chain (146 aa).

Residues 1–19 form the signal peptide; sequence MNPAHLLVLPAVCVSFLGA. Positions 20 to 27 are excised as a propeptide; sequence SIIPPQSL. 6 cysteine pairs are disulfide-bonded: C54–C145, C56–C72, C71–C126, C78–C119, C87–C112, and C105–C117. Positions 55, 57, and 59 each coordinate Ca(2+). H75 is a catalytic residue. D76 is a binding site for Ca(2+). Residue D120 is part of the active site.

Belongs to the phospholipase A2 family. Group I subfamily. D49 sub-subfamily. As to quaternary structure, heterodimer with beta-bungarotoxin B chain; disulfide-linked. The A chain has phospholipase A2 activity and the B chain shows homology with the basic protease inhibitors. Requires Ca(2+) as cofactor. Expressed by the venom gland.

The protein localises to the secreted. It catalyses the reaction a 1,2-diacyl-sn-glycero-3-phosphocholine + H2O = a 1-acyl-sn-glycero-3-phosphocholine + a fatty acid + H(+). In terms of biological role, snake venom phospholipase A2 (PLA2) that inhibits neuromuscular transmission by blocking acetylcholine release from the nerve termini. PLA2 catalyzes the calcium-dependent hydrolysis of the 2-acyl groups in 3-sn-phosphoglycerides. The chain is Basic phospholipase A2 beta-bungarotoxin A1 chain from Bungarus flaviceps flaviceps (Red-headed krait).